The following is a 619-amino-acid chain: UPF0329 protein ECU01_0100/ECU01_1510/ECU08_0030 (619 aa).

The span at 350 to 384 (REEREKREKREKREESKGRGKRGAGEAKEESKEED) shows a compositional bias: basic and acidic residues. A disordered region spans residues 350 to 428 (REEREKREKR…GKRKGDGHHY (79 aa)). The span at 385-399 (GKEEEGVEAEEEESA) shows a compositional bias: acidic residues. Basic residues predominate over residues 411–428 (ARRKKSLKGKRKGDGHHY).

Belongs to the UPF0329 family.

This Encephalitozoon cuniculi (strain GB-M1) (Microsporidian parasite) protein is UPF0329 protein ECU01_0100/ECU01_1510/ECU08_0030.